Reading from the N-terminus, the 158-residue chain is Small ribosomal subunit protein uS7 (158 aa).

Belongs to the universal ribosomal protein uS7 family. Part of the 30S ribosomal subunit. Contacts proteins S9 and S11.

Functionally, one of the primary rRNA binding proteins, it binds directly to 16S rRNA where it nucleates assembly of the head domain of the 30S subunit. Is located at the subunit interface close to the decoding center, probably blocks exit of the E-site tRNA. This is Small ribosomal subunit protein uS7 from Christiangramia forsetii (strain DSM 17595 / CGMCC 1.15422 / KT0803) (Gramella forsetii).